A 256-amino-acid polypeptide reads, in one-letter code: uncharacterized protein (256 aa).

The signal sequence occupies residues 1-24 (MIKRVNKLVIGISLLFLVISITAG). C25 carries N-palmitoyl cysteine lipidation. Residue C25 is the site of S-diacylglycerol cysteine attachment.

This sequence belongs to the staphylococcal tandem lipoprotein family.

It localises to the cell membrane. This is an uncharacterized protein from Staphylococcus aureus (strain bovine RF122 / ET3-1).